A 237-amino-acid polypeptide reads, in one-letter code: DNA repair protein RecO (237 aa).

The protein belongs to the RecO family.

Involved in DNA repair and RecF pathway recombination. This is DNA repair protein RecO from Rickettsia africae (strain ESF-5).